The chain runs to 193 residues: Peptidyl-tRNA hydrolase (193 aa).

Residue His17 coordinates tRNA. His22 serves as the catalytic Proton acceptor. Residues Phe68, Asn70, and Asn116 each contribute to the tRNA site.

The protein belongs to the PTH family. In terms of assembly, monomer.

It is found in the cytoplasm. The catalysed reaction is an N-acyl-L-alpha-aminoacyl-tRNA + H2O = an N-acyl-L-amino acid + a tRNA + H(+). In terms of biological role, hydrolyzes ribosome-free peptidyl-tRNAs (with 1 or more amino acids incorporated), which drop off the ribosome during protein synthesis, or as a result of ribosome stalling. Catalyzes the release of premature peptidyl moieties from peptidyl-tRNA molecules trapped in stalled 50S ribosomal subunits, and thus maintains levels of free tRNAs and 50S ribosomes. The sequence is that of Peptidyl-tRNA hydrolase from Xanthomonas campestris pv. campestris (strain 8004).